Reading from the N-terminus, the 433-residue chain is 3-deoxy-D-manno-octulosonic acid transferase (433 aa).

Residues 11–31 form a helical; Signal-anchor membrane-spanning segment; sequence TFLYDCFLIFAFMVGLPRILY. The active-site Proton acceptor is Glu-70. CMP-binding positions include 277 to 278, 317 to 319, and 344 to 347; these read PR, IGW, and NLLE.

The protein belongs to the glycosyltransferase group 1 family. Glycosyltransferase 30 subfamily.

It is found in the cell inner membrane. The catalysed reaction is lipid IVA (E. coli) + CMP-3-deoxy-beta-D-manno-octulosonate = alpha-Kdo-(2-&gt;6)-lipid IVA (E. coli) + CMP + H(+). The enzyme catalyses alpha-Kdo-(2-&gt;6)-lipid IVA (E. coli) + CMP-3-deoxy-beta-D-manno-octulosonate = alpha-Kdo-(2-&gt;4)-alpha-Kdo-(2-&gt;6)-lipid IVA (E. coli) + CMP + H(+). It catalyses the reaction alpha-Kdo-(2-&gt;4)-alpha-Kdo-(2-&gt;6)-lipid IVA (E. coli) + CMP-3-deoxy-beta-D-manno-octulosonate = alpha-Kdo-(2-&gt;8)-alpha-Kdo-(2-&gt;4)-alpha-Kdo-(2-&gt;6)-lipid IVA (E. coli) + CMP + H(+). It carries out the reaction alpha-Kdo-(2-&gt;8)-alpha-Kdo-(2-&gt;4)-alpha-Kdo-(2-&gt;6)-lipid IVA (E. coli) + CMP-3-deoxy-beta-D-manno-octulosonate = alpha-Kdo-(2-&gt;8)-[alpha-Kdo-(2-&gt;4)]-alpha-Kdo-(2-&gt;4)-alpha-Kdo-(2-&gt;6)-lipid IVA + CMP + H(+). The protein operates within bacterial outer membrane biogenesis; LPS core biosynthesis. Its function is as follows. Involved in lipopolysaccharide (LPS) biosynthesis. Catalyzes the transfer of predominantly four 3-deoxy-D-manno-octulosonate (Kdo) residues from CMP-Kdo to lipid IV(A), the tetraacyldisaccharide-1,4'-bisphosphate precursor of lipid A. Thus generates the genus-specific LPS epitope of Chlamydia, composed of the trisaccharide alpha-Kdo-(2-&gt;8)-alpha-Kdo-(2-&gt;4)-alpha-Kdo. The sequence is that of 3-deoxy-D-manno-octulosonic acid transferase (waaA) from Chlamydophila psittaci (strain ATCC VR-125 / 6BC) (Chlamydia psittaci).